We begin with the raw amino-acid sequence, 84 residues long: MAHKKGGGSTKNGRDSNPQYLGVKAFGGQEVSAGSIIVRQRGTAFKPGKLVGIGRDHTIFALQSGKVFFRSGRNNKKFVDIIPA.

A disordered region spans residues 1-21 (MAHKKGGGSTKNGRDSNPQYL).

Belongs to the bacterial ribosomal protein bL27 family.

In Chloroherpeton thalassium (strain ATCC 35110 / GB-78), this protein is Large ribosomal subunit protein bL27.